The sequence spans 305 residues: Acetaldehyde dehydrogenase (305 aa).

Position 13 to 16 (13 to 16) interacts with NAD(+); that stretch reads SGNI. Cys-128 acts as the Acyl-thioester intermediate in catalysis. NAD(+) contacts are provided by residues 159-167 and Asn-278; that span reads SAGPGTRQN.

It belongs to the acetaldehyde dehydrogenase family.

The enzyme catalyses acetaldehyde + NAD(+) + CoA = acetyl-CoA + NADH + H(+). This Roseiflexus sp. (strain RS-1) protein is Acetaldehyde dehydrogenase.